Consider the following 802-residue polypeptide: Elongation factor G, mitochondrial (802 aa).

A mitochondrion-targeting transit peptide spans 1-24 (MRYPSLARLPRRALSGLARAPVRL). In terms of domain architecture, tr-type G spans 100–387 (SRVRNIGIAA…GVIDYLPNPS (288 aa)). GTP contacts are provided by residues 109–116 (AHIDSGKT), 185–189 (DTPGH), and 239–242 (NKMD).

The protein belongs to the TRAFAC class translation factor GTPase superfamily. Classic translation factor GTPase family. EF-G/EF-2 subfamily.

The protein localises to the mitochondrion. It functions in the pathway protein biosynthesis; polypeptide chain elongation. Functionally, mitochondrial GTPase that catalyzes the GTP-dependent ribosomal translocation step during translation elongation. During this step, the ribosome changes from the pre-translocational (PRE) to the post-translocational (POST) state as the newly formed A-site-bound peptidyl-tRNA and P-site-bound deacylated tRNA move to the P and E sites, respectively. Catalyzes the coordinated movement of the two tRNA molecules, the mRNA and conformational changes in the ribosome. The sequence is that of Elongation factor G, mitochondrial (mef1) from Aspergillus terreus (strain NIH 2624 / FGSC A1156).